The chain runs to 491 residues: GTPase Der (491 aa).

The EngA-type G 1 domain occupies 3–178 (AKIALVGRPN…EMRDLLPEED (176 aa)). Residues 9–16 (GRPNVGKS), 57–61 (DTGGI), and 130–133 (NKVD) contribute to the GTP site. A compositionally biased stretch (acidic residues) spans 198–224 (DAETEDGASASETEEDITEETVEDEPE). The interval 198-225 (DAETEDGASASETEEDITEETVEDEPEA) is disordered. Residues 227–400 (LRLCMLGRPN…LAARIRRECS (174 aa)) form the EngA-type G 2 domain. GTP contacts are provided by residues 233-240 (GRPNAGKS), 280-284 (DTAGV), and 345-348 (NKMD). One can recognise a KH-like domain in the interval 401 to 485 (VRIPTGQLNR…PMRVHFRSSH (85 aa)).

The protein belongs to the TRAFAC class TrmE-Era-EngA-EngB-Septin-like GTPase superfamily. EngA (Der) GTPase family. As to quaternary structure, associates with the 50S ribosomal subunit.

GTPase that plays an essential role in the late steps of ribosome biogenesis. This is GTPase Der from Nitratidesulfovibrio vulgaris (strain ATCC 29579 / DSM 644 / CCUG 34227 / NCIMB 8303 / VKM B-1760 / Hildenborough) (Desulfovibrio vulgaris).